We begin with the raw amino-acid sequence, 104 residues long: MRFFSYLGLLLAGLVSLQGFSTDNPLEEELRYWCQYVKNCRFCWACQDGLCKNKVLKDMPSVQEHSYPMEHCMIHRQCKYIRDGPIFQAECTMQTCDATHLINA.

The N-terminal stretch at 1–31 (MRFFSYLGLLLAGLVSLQGFSTDNPLEEELR) is a signal peptide.

The protein belongs to the asfivirus MGF 110 family.

Plays a role in virus cell tropism, and may be required for efficient virus replication in macrophages. This African swine fever virus (isolate Warthog/Namibia/Wart80/1980) (ASFV) protein is Protein MGF 110-2L.